Here is an 88-residue protein sequence, read N- to C-terminus: Small ribosomal subunit protein bS16c (88 aa).

This sequence belongs to the bacterial ribosomal protein bS16 family.

It localises to the plastid. The protein localises to the chloroplast. The polypeptide is Small ribosomal subunit protein bS16c (Coffea arabica (Arabian coffee)).